Here is a 458-residue protein sequence, read N- to C-terminus: tRNA modification GTPase MnmE (458 aa).

The (6S)-5-formyl-5,6,7,8-tetrahydrofolate site is built by Arg-26, Glu-88, and Arg-127. Positions 224-378 constitute a TrmE-type G domain; sequence GLSTAIIGRP…IEDRINQLFF (155 aa). Residue Asn-234 participates in K(+) binding. GTP is bound by residues 234–239, 253–259, and 278–281; these read NVGKSS, TDIAGTT, and DTAG. A Mg(2+)-binding site is contributed by Ser-238. The K(+) site is built by Thr-253, Ile-255, and Thr-258. A Mg(2+)-binding site is contributed by Thr-259. Residue Lys-458 coordinates (6S)-5-formyl-5,6,7,8-tetrahydrofolate.

The protein belongs to the TRAFAC class TrmE-Era-EngA-EngB-Septin-like GTPase superfamily. TrmE GTPase family. As to quaternary structure, homodimer. Heterotetramer of two MnmE and two MnmG subunits. The cofactor is K(+).

Its subcellular location is the cytoplasm. Exhibits a very high intrinsic GTPase hydrolysis rate. Involved in the addition of a carboxymethylaminomethyl (cmnm) group at the wobble position (U34) of certain tRNAs, forming tRNA-cmnm(5)s(2)U34. In Streptococcus pyogenes serotype M28 (strain MGAS6180), this protein is tRNA modification GTPase MnmE.